Here is a 250-residue protein sequence, read N- to C-terminus: 5'-nucleotidase SurE (250 aa).

Residues D8, D9, S40, and N94 each coordinate a divalent metal cation.

It belongs to the SurE nucleotidase family. A divalent metal cation serves as cofactor.

The protein localises to the cytoplasm. It catalyses the reaction a ribonucleoside 5'-phosphate + H2O = a ribonucleoside + phosphate. Nucleotidase that shows phosphatase activity on nucleoside 5'-monophosphates. This chain is 5'-nucleotidase SurE, found in Wolbachia pipientis wMel.